A 174-amino-acid polypeptide reads, in one-letter code: Alpha-crystallin B chain (174 aa).

An N-acetylmethionine modification is found at methionine 1. In terms of domain architecture, sHSP spans 55 to 163; that stretch reads RMPSWLETGL…PERSIPITRE (109 aa). Zn(2+)-binding residues include histidine 82, histidine 103, glutamate 105, and histidine 110. A disordered region spans residues 148 to 174; the sequence is RKQSDVPERSIPITREEKPAIAGSQRK. Residues 149-166 are compositionally biased toward basic and acidic residues; sequence KQSDVPERSIPITREEKP.

The protein belongs to the small heat shock protein (HSP20) family. As to quaternary structure, heteromer composed of three CRYAA and one CRYAB subunits. Aggregates with homologous proteins, including the small heat shock protein HSPB1, to form large heteromeric complexes. Inter-subunit bridging via zinc ions enhances stability, which is crucial as there is no protein turn over in the lens. As to expression, lens as well as other tissues.

Functionally, may contribute to the transparency and refractive index of the lens. The polypeptide is Alpha-crystallin B chain (CRYAB) (Gallus gallus (Chicken)).